The primary structure comprises 142 residues: Large ribosomal subunit protein uL13 (142 aa).

Belongs to the universal ribosomal protein uL13 family. Part of the 50S ribosomal subunit.

Its function is as follows. This protein is one of the early assembly proteins of the 50S ribosomal subunit, although it is not seen to bind rRNA by itself. It is important during the early stages of 50S assembly. The polypeptide is Large ribosomal subunit protein uL13 (Dechloromonas aromatica (strain RCB)).